Here is a 151-residue protein sequence, read N- to C-terminus: Sigma factor binding protein 1, chloroplastic (151 aa).

Over residues methionine 1 to serine 13 the composition is skewed to low complexity. Disordered regions lie at residues methionine 1 to lysine 41 and threonine 66 to glutamate 93. The N-terminal 54 residues, methionine 1–cysteine 54, are a transit peptide targeting the chloroplast. A Bipartite nuclear localization signal motif is present at residues lysine 16–lysine 32. Residues phenylalanine 58–glycine 67 carry the VQ motif.

In terms of assembly, interacts with the sigma factor SIGA in chloroplast. Interacts with WRKY25 and WRKY33 in the nucleus. As to expression, expressed in leaves and roots, but not in flowers.

The protein resides in the plastid. The protein localises to the chloroplast. It is found in the nucleus. In terms of biological role, contributes to plant defense. May regulate chloroplast metabolism upon infection with pathogens such as Pseudomonas syringae. Functions as activator of WRKY33 in plant defense against necrotrophic pathogens by stimulating the DNA-binding activity of WRKY33. The chain is Sigma factor binding protein 1, chloroplastic (SIB1) from Arabidopsis thaliana (Mouse-ear cress).